Reading from the N-terminus, the 464-residue chain is Soluble pyridine nucleotide transhydrogenase (464 aa).

Position 35 to 44 (35 to 44 (DSRRQVGGNC)) interacts with FAD.

This sequence belongs to the class-I pyridine nucleotide-disulfide oxidoreductase family. It depends on FAD as a cofactor.

Its subcellular location is the cytoplasm. It carries out the reaction NAD(+) + NADPH = NADH + NADP(+). Its function is as follows. Conversion of NADPH, generated by peripheral catabolic pathways, to NADH, which can enter the respiratory chain for energy generation. This Pseudomonas fluorescens (strain SBW25) protein is Soluble pyridine nucleotide transhydrogenase.